The sequence spans 1230 residues: Myosin-1 (1230 aa).

The interval 1 to 32 is disordered; sequence MGISRRPKADKNASAADSAPGGKPNIQKAQFD. The region spanning 39–713 is the Myosin motor domain; the sequence is VGVSDLTLIS…TLFALEHMRD (675 aa). 132–139 contacts ATP; that stretch reads GESGAGKT. Positions 403-485 are actin-binding; sequence SIGILDIYGF…PGVFSAMKDA (83 aa). IQ domains are found at residues 717 to 737 and 738 to 763; these read HNMA…RIEA and ATRI…KGHQ. A TH1 domain is found at 771 to 961; the sequence is RRRYSLLGSR…TIHTQAGEPP (191 aa). Disordered regions lie at residues 945–1018, 1033–1065, and 1116–1230; these read QDHY…AARP, TRNT…PVSK, and AYLE…EDDW. Residues 1033 to 1045 show a composition bias toward polar residues; sequence TRNTSVQSTQSTR. Composition is skewed to pro residues over residues 1047-1062 and 1122-1142; these read VPPP…PPAP and TPPP…PGPP. The SH3 domain occupies 1064 to 1123; the sequence is SKEPQYRVLYEFAGQSANEFSLKQGEIVTVLQKETNGWWLTKNVRGQGWAPTAYLEEVTP. Residues 1179 to 1214 are compositionally biased toward low complexity; sequence RDSGMSISSNGSGNNSGRSTPTPSLAGGLAEALRAR.

The protein belongs to the TRAFAC class myosin-kinesin ATPase superfamily. Myosin family.

The protein resides in the cytoplasm. Its subcellular location is the cytoskeleton. The protein localises to the actin patch. Type-I myosin implicated in the organization of the actin cytoskeleton. Required for proper actin cytoskeleton polarization. At the cell cortex, assembles in patch-like structures together with proteins from the actin-polymerizing machinery and promotes actin assembly. Functions as actin nucleation-promoting factor (NPF) for the Arp2/3 complex. The protein is Myosin-1 (myoA) of Sclerotinia sclerotiorum (strain ATCC 18683 / 1980 / Ss-1) (White mold).